Consider the following 92-residue polypeptide: Small ribosomal subunit protein bS18 (92 aa).

This sequence belongs to the bacterial ribosomal protein bS18 family. Part of the 30S ribosomal subunit. Forms a tight heterodimer with protein bS6.

Binds as a heterodimer with protein bS6 to the central domain of the 16S rRNA, where it helps stabilize the platform of the 30S subunit. The polypeptide is Small ribosomal subunit protein bS18 (Ralstonia nicotianae (strain ATCC BAA-1114 / GMI1000) (Ralstonia solanacearum)).